The primary structure comprises 240 residues: Ribonuclease PH (240 aa).

Phosphate-binding positions include Arg-87 and 125 to 127 (GTR).

This sequence belongs to the RNase PH family. Homohexameric ring arranged as a trimer of dimers.

The catalysed reaction is tRNA(n+1) + phosphate = tRNA(n) + a ribonucleoside 5'-diphosphate. In terms of biological role, phosphorolytic 3'-5' exoribonuclease that plays an important role in tRNA 3'-end maturation. Removes nucleotide residues following the 3'-CCA terminus of tRNAs; can also add nucleotides to the ends of RNA molecules by using nucleoside diphosphates as substrates, but this may not be physiologically important. Probably plays a role in initiation of 16S rRNA degradation (leading to ribosome degradation) during starvation. This is Ribonuclease PH from Dictyoglomus turgidum (strain DSM 6724 / Z-1310).